A 341-amino-acid polypeptide reads, in one-letter code: tRNA N6-adenosine threonylcarbamoyltransferase (341 aa).

Positions 111 and 115 each coordinate Fe cation. Residues Leu-134–Gly-138, Asp-167, Gly-180, and Asn-277 contribute to the substrate site. Asp-305 provides a ligand contact to Fe cation.

Belongs to the KAE1 / TsaD family. The cofactor is Fe(2+).

Its subcellular location is the cytoplasm. The enzyme catalyses L-threonylcarbamoyladenylate + adenosine(37) in tRNA = N(6)-L-threonylcarbamoyladenosine(37) in tRNA + AMP + H(+). In terms of biological role, required for the formation of a threonylcarbamoyl group on adenosine at position 37 (t(6)A37) in tRNAs that read codons beginning with adenine. Is involved in the transfer of the threonylcarbamoyl moiety of threonylcarbamoyl-AMP (TC-AMP) to the N6 group of A37, together with TsaE and TsaB. TsaD likely plays a direct catalytic role in this reaction. The protein is tRNA N6-adenosine threonylcarbamoyltransferase of Chromobacterium violaceum (strain ATCC 12472 / DSM 30191 / JCM 1249 / CCUG 213 / NBRC 12614 / NCIMB 9131 / NCTC 9757 / MK).